The sequence spans 97 residues: ATP-dependent Clp protease adapter protein ClpS (97 aa).

It belongs to the ClpS family. Binds to the N-terminal domain of the chaperone ClpA.

Involved in the modulation of the specificity of the ClpAP-mediated ATP-dependent protein degradation. The protein is ATP-dependent Clp protease adapter protein ClpS of Nostoc sp. (strain PCC 7120 / SAG 25.82 / UTEX 2576).